The sequence spans 1429 residues: MGARASVLSGGKLDKWEKIQLRPGGKKKYRLKHLVWASRELERFALNPNLLETVEGCRQIIRQLQPSLQTGSEELRSLFNTVATLYWVHQSIQVRDTKEALDKLEEEQNRTQQKTQQGKADKGVSQNYPIVQNLQGQMVHQALSPRTLNAWVKVIEEKAFSPEVIPMFSALSEGATPQDLNTMLNTVGGHQAAMQMLKDTINEEAAEWDRMHPVQAGPIPPGQIREPRGSDIAGTTSTLQEQITWMTSNPPIPVGEIYKRWIILGLNKIVRMYSPVSILDIRQGPKEPFRDYVDRFFRVLRAEQATQEVKNWMTETLLVQNANPDCRTILKALGSGATLEEMMTACQGVGGPGHKARVLAEAMSQVTNSAVMMQRGNFKGQRRIIKCFNCGKEGHLARNCRAPRKKGCWKCGKEGHQMKDCSERQANFFREVLASQQREARKFSSEQTRANSPTSRELWVRGEDNPLSETGNERSGTGSSFNFPQITLWQRPVVTVKVGGQLREALLDTGADDTVLEEINLPGKWKPKMIGGIGGFIKVRQYDQVCMEICGQKAIGTVLVGPTPVNIIGRNMLTQIGCTLNFPISPIETVPVKLKPGMDGPKVKQWPLTEEKIKALVEICTEMEKEGKISKIGPENPYNTPVFAIKKKDSTKWIKLVDFRELNKRTPDFWEVQLGIPHPAGLKKKKSVTVLDVGDAYFSVPLDKDFRKYTAFTIPSINNETPGIRYQYNVLPQGWKGSPAIFQCSMTKILEPFRRKNPDMVLYQYMDDLYVGSDLEIGQHRAKIEELREHLLRWGFTTPDKKHQKEPPFLWMGYELHPDKWTVQPIQLPDKDSWTVNDIQKLVGKLNWASQIFPGIKVKQLCKLLRGVKALTDIVPLTAEAELELAENREILKEPVHGVYYDPSKDLIAEIQKQGHGQWTYQIYQEPYKNLKTGKYARIRSAHTNDVKQLTEVVQKVAMESIVIWGKTPKFRLPIQKETWGTWWTEYWQATWIPEWEFVNTPPLVKLWYQLETEPIVGAETFYVDGAANRETKQGKAGYVTDKGRQKVISITETTNQKTELQAIHLALQDSGSEVNIVTDSQYALGIIQAQPDKSESELVNQIIEQLIKKDRVYLSWVPAHKGIGGNEQVDKLVSSGIRKVLFLDGIDKAQEEHEKYHNNWRAMASDFNLPPVVAKEIVASCDKCQLKGEAIHGQVDCSPGIWQLDCTHLEGKIILVAVHVASGYIEAEVIPAETGQETAYFILKLAGRWPVRVIHTDNGSNFTSAVVKAACWWADIKQEFGIPYNPQSQGVVESMNKELKKIIGQVREQAEHLKTAVQMAVFIHNFKRKGGIGGYSAGERIIDIIATDIQTKELQKQITKIQNFRVYYRDSREPIWKGPAKLLWKGEGAVVIQNSEIKVVPRRKAKIIRDYGKQMAGDDCVAGRQDED.

A lipid anchor (N-myristoyl glycine; by host) is attached at Gly2. The interval 7–31 (VLSGGKLDKWEKIQLRPGGKKKYRL) is interaction with Gp41. The tract at residues 8–43 (LSGGKLDKWEKIQLRPGGKKKYRLKHLVWASRELER) is interaction with host CALM1. An interaction with host AP3D1 region spans residues 12–19 (KLDKWEKI). The tract at residues 14 to 33 (DKWEKIQLRPGGKKKYRLKH) is interaction with membrane phosphatidylinositol 4,5-bisphosphate and RNA. Residues 16–22 (WEKIQLR) carry the Nuclear export signal motif. The Nuclear localization signal signature appears at 26-32 (KKKYRLK). Residues 73 to 77 (EELRS) form an interaction with membrane phosphatidylinositol 4,5-bisphosphate region. The tract at residues 105-124 (EEEQNRTQQKTQQGKADKGV) is disordered. Over residues 110 to 124 (RTQQKTQQGKADKGV) the composition is skewed to polar residues. Position 128 is a phosphotyrosine; by host (Tyr128). The interval 185-223 (NTVGGHQAAMQMLKDTINEEAAEWDRMHPVQAGPIPPGQ) is interaction with human PPIA/CYPA and NUP153. Positions 273 to 359 (YSPVSILDIR…GGPGHKARVL (87 aa)) are dimerization/Multimerization of capsid protein p24. 2 consecutive CCHC-type zinc fingers follow at residues 385–402 (IKCF…NCRA) and 406–423 (KGCW…DCSE). A disordered region spans residues 439-479 (EARKFSSEQTRANSPTSRELWVRGEDNPLSETGNERSGTGS). 2 stretches are compositionally biased toward polar residues: residues 445–455 (SEQTRANSPTS) and 467–479 (LSET…GTGS). Positions 484–488 (PQITL) are dimerization of protease. Residues 503–572 (REALLDTGAD…TPVNIIGRNM (70 aa)) enclose the Peptidase A2 domain. Residue Asp508 is the For protease activity; shared with dimeric partner of the active site. Dimerization of protease stretches follow at residues 532 to 538 (GIGGFIK) and 571 to 583 (NMLT…LNFP). Residues 626–816 (EGKISKIGPE…PPFLWMGYEL (191 aa)) form the Reverse transcriptase domain. Mg(2+) is bound by residues Asp692, Asp767, and Asp768. Positions 809–817 (FLWMGYELH) are RT 'primer grip'. Residues 980–996 (WGTWWTEYWQATWIPEW) carry the Tryptophan repeat motif motif. The RNase H type-1 domain occupies 1016–1139 (IVGAETFYVD…VDKLVSSGIR (124 aa)). Mg(2+) is bound by residues Asp1025, Glu1060, Asp1080, and Asp1131. The Integrase-type zinc finger occupies 1145 to 1186 (DGIDKAQEEHEKYHNNWRAMASDFNLPPVVAKEIVASCDKCQ). Zn(2+) contacts are provided by His1154, His1158, Cys1182, and Cys1185. The Integrase catalytic domain maps to 1196–1346 (VDCSPGIWQL…SAGERIIDII (151 aa)). Residues Asp1206, Asp1258, and Glu1294 each coordinate Mg(2+). The segment at residues 1365–1411 (FRVYYRDSREPIWKGPAKLLWKGEGAVVIQNSEIKVVPRRKAKIIRD) is a DNA-binding region (integrase-type).

Homotrimer; further assembles as hexamers of trimers. Interacts with gp41 (via C-terminus). Interacts with host CALM1; this interaction induces a conformational change in the Matrix protein, triggering exposure of the myristate group. Interacts with host AP3D1; this interaction allows the polyprotein trafficking to multivesicular bodies during virus assembly. Part of the pre-integration complex (PIC) which is composed of viral genome, matrix protein, Vpr and integrase. In terms of assembly, homodimer; the homodimer further multimerizes as homohexamers or homopentamers. Interacts with human PPIA/CYPA; This interaction stabilizes the capsid. Interacts with human NUP153. Interacts with host PDZD8; this interaction stabilizes the capsid. Interacts with monkey TRIM5; this interaction destabilizes the capsid. As to quaternary structure, homodimer, whose active site consists of two apposed aspartic acid residues. Heterodimer of p66 RT and p51 RT (RT p66/p51). Heterodimerization of RT is essential for DNA polymerase activity. The overall folding of the subdomains is similar in p66 RT and p51 RT but the spatial arrangements of the subdomains are dramatically different. In terms of assembly, homotetramer; may further associate as a homohexadecamer. Part of the pre-integration complex (PIC) which is composed of viral genome, matrix protein, Vpr and integrase. Interacts with human SMARCB1/INI1 and human PSIP1/LEDGF isoform 1. Interacts with human KPNA3; this interaction might play a role in nuclear import of the pre-integration complex. Interacts with human NUP153; this interaction might play a role in nuclear import of the pre-integration complex. It depends on Mg(2+) as a cofactor. In terms of processing, specific enzymatic cleavages by the viral protease yield mature proteins. The protease is released by autocatalytic cleavage. The polyprotein is cleaved during and after budding, this process is termed maturation. Proteolytic cleavage of p66 RT removes the RNase H domain to yield the p51 RT subunit. Nucleocapsid protein p7 might be further cleaved after virus entry. Tyrosine phosphorylated presumably in the virion by a host kinase. Phosphorylation is apparently not a major regulator of membrane association. Post-translationally, phosphorylated possibly by host MAPK1; this phosphorylation is necessary for Pin1-mediated virion uncoating. In terms of processing, methylated by host PRMT6, impairing its function by reducing RNA annealing and the initiation of reverse transcription.

The protein resides in the host cell membrane. It is found in the host endosome. The protein localises to the host multivesicular body. It localises to the virion membrane. Its subcellular location is the host nucleus. The protein resides in the host cytoplasm. It is found in the virion. The catalysed reaction is Specific for a P1 residue that is hydrophobic, and P1' variable, but often Pro.. It catalyses the reaction Endohydrolysis of RNA in RNA/DNA hybrids. Three different cleavage modes: 1. sequence-specific internal cleavage of RNA. Human immunodeficiency virus type 1 and Moloney murine leukemia virus enzymes prefer to cleave the RNA strand one nucleotide away from the RNA-DNA junction. 2. RNA 5'-end directed cleavage 13-19 nucleotides from the RNA end. 3. DNA 3'-end directed cleavage 15-20 nucleotides away from the primer terminus.. The enzyme catalyses 3'-end directed exonucleolytic cleavage of viral RNA-DNA hybrid.. It carries out the reaction DNA(n) + a 2'-deoxyribonucleoside 5'-triphosphate = DNA(n+1) + diphosphate. Its activity is regulated as follows. Protease: The viral protease is inhibited by many synthetic protease inhibitors (PIs), such as amprenavir, atazanavir, indinavir, loprinavir, nelfinavir, ritonavir and saquinavir. Use of protease inhibitors in tritherapy regimens permit more ambitious therapeutic strategies. Reverse transcriptase/ribonuclease H: RT can be inhibited either by nucleoside RT inhibitors (NRTIs) or by non nucleoside RT inhibitors (NNRTIs). NRTIs act as chain terminators, whereas NNRTIs inhibit DNA polymerization by binding a small hydrophobic pocket near the RT active site and inducing an allosteric change in this region. Classical NRTIs are abacavir, adefovir (PMEA), didanosine (ddI), lamivudine (3TC), stavudine (d4T), tenofovir (PMPA), zalcitabine (ddC), and zidovudine (AZT). Classical NNRTIs are atevirdine (BHAP U-87201E), delavirdine, efavirenz (DMP-266), emivirine (I-EBU), and nevirapine (BI-RG-587). The tritherapies used as a basic effective treatment of AIDS associate two NRTIs and one NNRTI. Mediates, with Gag polyprotein, the essential events in virion assembly, including binding the plasma membrane, making the protein-protein interactions necessary to create spherical particles, recruiting the viral Env proteins, and packaging the genomic RNA via direct interactions with the RNA packaging sequence (Psi). Gag-Pol polyprotein may regulate its own translation, by the binding genomic RNA in the 5'-UTR. At low concentration, the polyprotein would promote translation, whereas at high concentration, the polyprotein would encapsidate genomic RNA and then shut off translation. In terms of biological role, targets the polyprotein to the plasma membrane via a multipartite membrane-binding signal, that includes its myristoylated N-terminus. Matrix protein is part of the pre-integration complex. Implicated in the release from host cell mediated by Vpu. Binds to RNA. Functionally, forms the conical core that encapsulates the genomic RNA-nucleocapsid complex in the virion. Most core are conical, with only 7% tubular. The core is constituted by capsid protein hexamer subunits. The core is disassembled soon after virion entry. Host restriction factors such as TRIM5-alpha or TRIMCyp bind retroviral capsids and cause premature capsid disassembly, leading to blocks in reverse transcription. Capsid restriction by TRIM5 is one of the factors which restricts HIV-1 to the human species. Host PIN1 apparently facilitates the virion uncoating. On the other hand, interactions with PDZD8 or CYPA stabilize the capsid. Its function is as follows. Encapsulates and protects viral dimeric unspliced genomic RNA (gRNA). Binds these RNAs through its zinc fingers. Acts as a nucleic acid chaperone which is involved in rearangement of nucleic acid secondary structure during gRNA retrotranscription. Also facilitates template switch leading to recombination. As part of the polyprotein, participates in gRNA dimerization, packaging, tRNA incorporation and virion assembly. Aspartyl protease that mediates proteolytic cleavages of Gag and Gag-Pol polyproteins during or shortly after the release of the virion from the plasma membrane. Cleavages take place as an ordered, step-wise cascade to yield mature proteins. This process is called maturation. Displays maximal activity during the budding process just prior to particle release from the cell. Also cleaves Nef and Vif, probably concomitantly with viral structural proteins on maturation of virus particles. Hydrolyzes host EIF4GI and PABP1 in order to shut off the capped cellular mRNA translation. The resulting inhibition of cellular protein synthesis serves to ensure maximal viral gene expression and to evade host immune response. Also mediates cleavage of host YTHDF3. Mediates cleavage of host CARD8, thereby activating the CARD8 inflammasome, leading to the clearance of latent HIV-1 in patient CD4(+) T-cells after viral reactivation; in contrast, HIV-1 can evade CARD8-sensing when its protease remains inactive in infected cells prior to viral budding. In terms of biological role, multifunctional enzyme that converts the viral RNA genome into dsDNA in the cytoplasm, shortly after virus entry into the cell. This enzyme displays a DNA polymerase activity that can copy either DNA or RNA templates, and a ribonuclease H (RNase H) activity that cleaves the RNA strand of RNA-DNA heteroduplexes in a partially processive 3' to 5' endonucleasic mode. Conversion of viral genomic RNA into dsDNA requires many steps. A tRNA(3)-Lys binds to the primer-binding site (PBS) situated at the 5'-end of the viral RNA. RT uses the 3' end of the tRNA primer to perform a short round of RNA-dependent minus-strand DNA synthesis. The reading proceeds through the U5 region and ends after the repeated (R) region which is present at both ends of viral RNA. The portion of the RNA-DNA heteroduplex is digested by the RNase H, resulting in a ssDNA product attached to the tRNA primer. This ssDNA/tRNA hybridizes with the identical R region situated at the 3' end of viral RNA. This template exchange, known as minus-strand DNA strong stop transfer, can be either intra- or intermolecular. RT uses the 3' end of this newly synthesized short ssDNA to perform the RNA-dependent minus-strand DNA synthesis of the whole template. RNase H digests the RNA template except for two polypurine tracts (PPTs) situated at the 5'-end and near the center of the genome. It is not clear if both polymerase and RNase H activities are simultaneous. RNase H probably can proceed both in a polymerase-dependent (RNA cut into small fragments by the same RT performing DNA synthesis) and a polymerase-independent mode (cleavage of remaining RNA fragments by free RTs). Secondly, RT performs DNA-directed plus-strand DNA synthesis using the PPTs that have not been removed by RNase H as primers. PPTs and tRNA primers are then removed by RNase H. The 3' and 5' ssDNA PBS regions hybridize to form a circular dsDNA intermediate. Strand displacement synthesis by RT to the PBS and PPT ends produces a blunt ended, linear dsDNA copy of the viral genome that includes long terminal repeats (LTRs) at both ends. Functionally, catalyzes viral DNA integration into the host chromosome, by performing a series of DNA cutting and joining reactions. This enzyme activity takes place after virion entry into a cell and reverse transcription of the RNA genome in dsDNA. The first step in the integration process is 3' processing. This step requires a complex comprising the viral genome, matrix protein, Vpr and integrase. This complex is called the pre-integration complex (PIC). The integrase protein removes 2 nucleotides from each 3' end of the viral DNA, leaving recessed CA OH's at the 3' ends. In the second step, the PIC enters cell nucleus. This process is mediated through integrase and Vpr proteins, and allows the virus to infect a non dividing cell. This ability to enter the nucleus is specific of lentiviruses, other retroviruses cannot and rely on cell division to access cell chromosomes. In the third step, termed strand transfer, the integrase protein joins the previously processed 3' ends to the 5' ends of strands of target cellular DNA at the site of integration. The 5'-ends are produced by integrase-catalyzed staggered cuts, 5 bp apart. A Y-shaped, gapped, recombination intermediate results, with the 5'-ends of the viral DNA strands and the 3' ends of target DNA strands remaining unjoined, flanking a gap of 5 bp. The last step is viral DNA integration into host chromosome. This involves host DNA repair synthesis in which the 5 bp gaps between the unjoined strands are filled in and then ligated. Since this process occurs at both cuts flanking the HIV genome, a 5 bp duplication of host DNA is produced at the ends of HIV-1 integration. Alternatively, Integrase may catalyze the excision of viral DNA just after strand transfer, this is termed disintegration. The protein is Gag-Pol polyprotein (gag-pol) of Homo sapiens (Human).